The following is a 943-amino-acid chain: Glycine dehydrogenase (decarboxylating) (943 aa).

An N6-(pyridoxal phosphate)lysine modification is found at K695.

It belongs to the GcvP family. In terms of assembly, the glycine cleavage system is composed of four proteins: P, T, L and H. Pyridoxal 5'-phosphate serves as cofactor.

The catalysed reaction is N(6)-[(R)-lipoyl]-L-lysyl-[glycine-cleavage complex H protein] + glycine + H(+) = N(6)-[(R)-S(8)-aminomethyldihydrolipoyl]-L-lysyl-[glycine-cleavage complex H protein] + CO2. The glycine cleavage system catalyzes the degradation of glycine. The P protein binds the alpha-amino group of glycine through its pyridoxal phosphate cofactor; CO(2) is released and the remaining methylamine moiety is then transferred to the lipoamide cofactor of the H protein. The polypeptide is Glycine dehydrogenase (decarboxylating) (Jannaschia sp. (strain CCS1)).